Here is a 478-residue protein sequence, read N- to C-terminus: Probable cyclin-dependent kinase 9 (478 aa).

Positions methionine 1–arginine 17 are enriched in polar residues. Residues methionine 1–asparagine 55 are disordered. Positions proline 22 to lysine 32 are enriched in basic and acidic residues. The region spanning tyrosine 85 to phenylalanine 413 is the Protein kinase domain. Residues isoleucine 91–valine 99 and lysine 114 each bind ATP. Aspartate 217 functions as the Proton acceptor in the catalytic mechanism. Residues histidine 444–phenylalanine 478 are disordered. Positions glutamine 451–proline 464 are enriched in low complexity.

The protein belongs to the protein kinase superfamily. CMGC Ser/Thr protein kinase family. CDC2/CDKX subfamily. In terms of assembly, associates with cyclin-T (cit-1.1 or cit-1.2) to form P-TEFb.

The protein localises to the nucleus. The catalysed reaction is L-seryl-[protein] + ATP = O-phospho-L-seryl-[protein] + ADP + H(+). It carries out the reaction L-threonyl-[protein] + ATP = O-phospho-L-threonyl-[protein] + ADP + H(+). The enzyme catalyses [DNA-directed RNA polymerase] + ATP = phospho-[DNA-directed RNA polymerase] + ADP + H(+). Its function is as follows. Essential member of the cyclin-dependent kinase pair (CDK9/cyclin-T) complex, also called positive transcription elongation factor B (P-TEFb), which is proposed to facilitate the transition from abortive to production elongation by phosphorylating the CTD (C-terminal domain) of the large subunit of RNA polymerase II (RNAP II) and spt-5. In Caenorhabditis elegans, this protein is Probable cyclin-dependent kinase 9 (cdk-9).